The following is a 525-amino-acid chain: GMP synthase [glutamine-hydrolyzing] (525 aa).

The region spanning 9 to 207 (RILILDFGSQ…VLEICGCAAL (199 aa)) is the Glutamine amidotransferase type-1 domain. Cys-86 serves as the catalytic Nucleophile. Active-site residues include His-181 and Glu-183. Residues 208–400 (WTPATIIEDA…LGLPYDMLYR (193 aa)) enclose the GMPS ATP-PPase domain. An ATP-binding site is contributed by 235-241 (SGGVDSS).

In terms of assembly, homodimer.

It carries out the reaction XMP + L-glutamine + ATP + H2O = GMP + L-glutamate + AMP + diphosphate + 2 H(+). The protein operates within purine metabolism; GMP biosynthesis; GMP from XMP (L-Gln route): step 1/1. Catalyzes the synthesis of GMP from XMP. This chain is GMP synthase [glutamine-hydrolyzing], found in Edwardsiella ictaluri (strain 93-146).